Consider the following 498-residue polypeptide: ATP synthase subunit beta, chloroplastic (498 aa).

172-179 (GGAGVGKT) contributes to the ATP binding site.

Belongs to the ATPase alpha/beta chains family. As to quaternary structure, F-type ATPases have 2 components, CF(1) - the catalytic core - and CF(0) - the membrane proton channel. CF(1) has five subunits: alpha(3), beta(3), gamma(1), delta(1), epsilon(1). CF(0) has four main subunits: a(1), b(1), b'(1) and c(9-12).

It localises to the plastid. The protein resides in the chloroplast thylakoid membrane. It catalyses the reaction ATP + H2O + 4 H(+)(in) = ADP + phosphate + 5 H(+)(out). Its function is as follows. Produces ATP from ADP in the presence of a proton gradient across the membrane. The catalytic sites are hosted primarily by the beta subunits. The polypeptide is ATP synthase subunit beta, chloroplastic (Nicotiana tomentosiformis (Tobacco)).